Consider the following 392-residue polypeptide: Leucine-rich repeat-containing protein 74B (392 aa).

The segment at 24–46 (RLSGVPEAEQGPEANWDSDLETE) is disordered. LRR repeat units lie at residues 106–129 (NPYVKRLDLRDNGLCGAGAEALAG), 134–157 (SSSIHDVDLSENQLGVAGAQALCA), 162–185 (NQAMRKMQLSGNGLEEQAAQHLAE), 192–213 (DLKSLDLSYNQLNDQAGETLGP), 220–241 (GLTELNVSWNHLRGPGAVAFAR), 248–269 (FLKVLDISYNGFGDPGASAVGE), 276–297 (VLEELNMSNNRISAMGALSLGL), 304–325 (TLRILVVSRNPMRSEGCFGLLK), and 334–356 (ALELLDFSDIQVNAEFDGLASSV).

This is Leucine-rich repeat-containing protein 74B from Homo sapiens (Human).